A 627-amino-acid polypeptide reads, in one-letter code: 2-oxoacid:ferredoxin oxidoreductase 1, subunit alpha (627 aa).

The YPITP motif signature appears at 253–257; sequence YPITP. Substrate-binding residues include threonine 256 and arginine 344.

Heterodimer composed of an alpha and a beta subunit.

It catalyses the reaction a 2-oxocarboxylate + 2 oxidized [2Fe-2S]-[ferredoxin] + CoA = an acyl-CoA + 2 reduced [2Fe-2S]-[ferredoxin] + CO2 + H(+). Its activity is regulated as follows. Inhibited by low concentration of 4-fluoro-7-nitrobenzofurazan (NBD-F). Its function is as follows. Catalyzes the coenzyme A-dependent oxidative decarboxylation of different 2-oxoacids such as 2-oxoglutarate, pyruvate and 2-oxobutyrate to form their CoA derivatives. The chain is 2-oxoacid:ferredoxin oxidoreductase 1, subunit alpha from Sulfurisphaera tokodaii (strain DSM 16993 / JCM 10545 / NBRC 100140 / 7) (Sulfolobus tokodaii).